The sequence spans 818 residues: Adhesion G protein-coupled receptor E5 (818 aa).

The first 23 residues, 1–23, serve as a signal peptide directing secretion; the sequence is MRGVRCPGLLVVCILLSLSGAGT. The Extracellular segment spans residues 24–533; the sequence is QKAESKNCAK…VQDPRLELIT (510 aa). The EGF-like 1 domain maps to 27–68; it reads ESKNCAKWCPINSKCVSNRSCVCKPGFSSEKELITNPAESCE. Cystine bridges form between cysteine 31–cysteine 41, cysteine 35–cysteine 47, cysteine 49–cysteine 67, cysteine 73–cysteine 86, cysteine 80–cysteine 95, cysteine 97–cysteine 118, cysteine 169–cysteine 182, cysteine 176–cysteine 191, cysteine 193–cysteine 212, cysteine 218–cysteine 231, cysteine 225–cysteine 240, and cysteine 242–cysteine 260. A glycan (N-linked (GlcNAc...) asparagine) is linked at asparagine 44. The region spanning 69 to 119 is the EGF-like 2; calcium-binding domain; the sequence is DINECLLPGFSCGDFAMCKNSEGSYTCVCNLGYKLLSGAESFVNESENTCQ. Asparagine 112 carries N-linked (GlcNAc...) asparagine glycosylation. Positions 165 to 213 constitute an EGF-like 3; calcium-binding domain; it reads DVNECISGQNHCHQSTHCINKLGGYSCICRQGWKPVPGSPNGPVSTVCE. The EGF-like 4; calcium-binding domain maps to 214-261; it reads DVDECSSGQHQCHNSTVCKNTVGSYKCHCRPGWKPTSGSLRGPDTICQ. Asparagine 227 is a glycosylation site (N-linked (GlcNAc...) asparagine). N-linked (GlcNAc...) asparagine glycosylation is found at asparagine 299 and asparagine 395. In terms of domain architecture, GAIN-B spans 347 to 525; sequence PFTYTSPSNT…AILMAQYHVQ (179 aa). Serine 425 is modified (phosphoserine). N-linked (GlcNAc...) asparagine glycans are attached at residues asparagine 461 and asparagine 502. Intrachain disulfides connect cysteine 482–cysteine 507 and cysteine 499–cysteine 509. The interval 482-525 is GPS; it reads CAFWKAHNGNGYWDTDGCSMNGTGFCHCNHLTSFAILMAQYHVQ. A helical transmembrane segment spans residues 534–554; the sequence is KVGLLLSLICLLLCILTFLLV. The Cytoplasmic portion of the chain corresponds to 555-562; that stretch reads KPIQSSRT. A helical membrane pass occupies residues 563-583; the sequence is MVHLHLCICLFLGSIIFLVGV. The Extracellular portion of the chain corresponds to 584–602; sequence ENEGGEVGLRCRLVAMMLH. A helical transmembrane segment spans residues 603–623; sequence FCFLAAFCWMALEGVELYFLV. Residues 624 to 637 are Cytoplasmic-facing; that stretch reads VRVFQGQGLSTWQR. Residues 638–658 traverse the membrane as a helical segment; the sequence is CLIGYGVPLLIVAISMAVVKM. The Extracellular segment spans residues 659 to 679; that stretch reads DGYGHATYCWLDFRKQGFLWS. Residues 680–700 form a helical membrane-spanning segment; sequence FSGPVAFIIFCNAAIFVITVW. Over 701-723 the chain is Cytoplasmic; it reads KLTKKFSEINPNMKKLRKARVLT. A helical transmembrane segment spans residues 724–744; sequence ITAIAQLLVLGCTWGFGLFLF. Residues 745-752 are Extracellular-facing; the sequence is NPHSTWLS. Residues 753-773 traverse the membrane as a helical segment; it reads YIFTLLNCLQGLFLYVMLCLL. Residues 774-818 are Cytoplasmic-facing; the sequence is NKKVREEYWKWACMVTGSKYTEFNSSTTGTGTSQTRALRSSESGM. Serine 798 is modified (phosphoserine). The segment covering 799–808 has biased composition (low complexity); that stretch reads STTGTGTSQT. The tract at residues 799–818 is disordered; that stretch reads STTGTGTSQTRALRSSESGM. Position 808 is a phosphothreonine (threonine 808). Residues 809–818 are compositionally biased toward polar residues; it reads RALRSSESGM. Serine 814 and serine 816 each carry phosphoserine.

Belongs to the G-protein coupled receptor 2 family. LN-TM7 subfamily. In terms of assembly, forms a heterodimer, consisting of a large extracellular region (alpha subunit) non-covalently linked to a seven-transmembrane moiety (beta subunit). Interacts with complement decay-accelerating factor (DAF). The largest isoform (isoform 1) do not interact with DAF. Also interacts with chondroitin sulfate. Post-translationally, proteolytically cleaved into 2 subunits, an extracellular alpha subunit and a seven-transmembrane subunit. As to expression, although predominantly expressed by cells of the immune system, expressed ubiquitously with particularly high levels of expression in the lung and the thymus gland. In the spleen, expression is detected on most myeloid cells and variable portions of T-cells, B-cells and NK cells. In the bone marrow, expressed in nearly all myeloid cells, whereas little if any expression is found on erythroid cells.

Its subcellular location is the cell membrane. It is found in the secreted. It localises to the extracellular space. Receptor potentially involved in both adhesion and signaling processes early after leukocyte activation. Plays an essential role in leukocyte migration. The sequence is that of Adhesion G protein-coupled receptor E5 from Mus musculus (Mouse).